Consider the following 203-residue polypeptide: tRNA (pseudouridine(54)-N(1))-methyltransferase (203 aa).

The S-adenosyl-L-methionine site is built by leucine 135 and glycine 156.

It belongs to the methyltransferase superfamily. TrmY family. As to quaternary structure, homodimer.

It is found in the cytoplasm. The enzyme catalyses pseudouridine(54) in tRNA + S-adenosyl-L-methionine = N(1)-methylpseudouridine(54) in tRNA + S-adenosyl-L-homocysteine + H(+). In terms of biological role, specifically catalyzes the N1-methylation of pseudouridine at position 54 (Psi54) in tRNAs. The chain is tRNA (pseudouridine(54)-N(1))-methyltransferase from Thermococcus onnurineus (strain NA1).